We begin with the raw amino-acid sequence, 110 residues long: NADH-quinone oxidoreductase subunit K (110 aa).

Helical transmembrane passes span 13 to 33 (LNHY…GLFM), 41 to 61 (ILMS…AFSI), and 73 to 93 (IIIL…LLIY).

The protein belongs to the complex I subunit 4L family. NDH-1 is composed of 14 different subunits. Subunits NuoA, H, J, K, L, M, N constitute the membrane sector of the complex.

It is found in the cell inner membrane. The catalysed reaction is a quinone + NADH + 5 H(+)(in) = a quinol + NAD(+) + 4 H(+)(out). Functionally, NDH-1 shuttles electrons from NADH, via FMN and iron-sulfur (Fe-S) centers, to quinones in the respiratory chain. The immediate electron acceptor for the enzyme in this species is believed to be ubiquinone. Couples the redox reaction to proton translocation (for every two electrons transferred, four hydrogen ions are translocated across the cytoplasmic membrane), and thus conserves the redox energy in a proton gradient. This chain is NADH-quinone oxidoreductase subunit K, found in Rickettsia felis (strain ATCC VR-1525 / URRWXCal2) (Rickettsia azadi).